The primary structure comprises 267 residues: Tetrahydromethanopterin S-methyltransferase subunit C (267 aa).

Helical transmembrane passes span 19–39, 40–60, 75–95, 96–116, 131–151, 162–182, and 221–241; these read IMAI…FMPA, QFSF…ADAV, IGMI…SVGG, IAGP…IGVL, AMVE…VVIA, YVVA…GILH, and GLMA…WAFM.

Belongs to the MtrC family. In terms of assembly, the complex is composed of 8 subunits; MtrA, MtrB, MtrC, MtrD, MtrE, MtrF, MtrG and MtrH.

The protein resides in the cell membrane. It catalyses the reaction 5-methyl-5,6,7,8-tetrahydromethanopterin + coenzyme M + 2 Na(+)(in) = 5,6,7,8-tetrahydromethanopterin + methyl-coenzyme M + 2 Na(+)(out). It participates in one-carbon metabolism; methanogenesis from CO(2); methyl-coenzyme M from 5,10-methylene-5,6,7,8-tetrahydromethanopterin: step 2/2. Part of a complex that catalyzes the formation of methyl-coenzyme M and tetrahydromethanopterin from coenzyme M and methyl-tetrahydromethanopterin. This is an energy-conserving, sodium-ion translocating step. The sequence is that of Tetrahydromethanopterin S-methyltransferase subunit C from Methanosarcina acetivorans (strain ATCC 35395 / DSM 2834 / JCM 12185 / C2A).